Here is a 392-residue protein sequence, read N- to C-terminus: ESX-1 secretion-associated protein EspA (392 aa).

Positions 302-392 are disordered; it reads TRQALRPRAD…GQKVLVRNVV (91 aa). A compositionally biased stretch (gly residues) spans 334-344; it reads QGMGGPVGMGG.

Homodimer; disulfide-linked. An artificial EsxB-EsxA heterodimer interacts with EspA.

It is found in the secreted. Functionally, required for secretion of EsxA (ESAT-6) and EsxB (CFP-10) and for virulence. Involved in translocation of bacteria from the host (human) phagolysosome to the host cytoplasm. This Mycobacterium tuberculosis (strain ATCC 25618 / H37Rv) protein is ESX-1 secretion-associated protein EspA.